We begin with the raw amino-acid sequence, 194 residues long: Potassium-transporting ATPase KdpC subunit (194 aa).

A helical membrane pass occupies residues 12-34; sequence LFLLLLTGGVYPLLTTALGQWWF.

The protein belongs to the KdpC family. As to quaternary structure, the system is composed of three essential subunits: KdpA, KdpB and KdpC.

Its subcellular location is the cell inner membrane. Functionally, part of the high-affinity ATP-driven potassium transport (or Kdp) system, which catalyzes the hydrolysis of ATP coupled with the electrogenic transport of potassium into the cytoplasm. This subunit acts as a catalytic chaperone that increases the ATP-binding affinity of the ATP-hydrolyzing subunit KdpB by the formation of a transient KdpB/KdpC/ATP ternary complex. This is Potassium-transporting ATPase KdpC subunit from Salmonella enteritidis PT4 (strain P125109).